A 559-amino-acid polypeptide reads, in one-letter code: DDB1- and CUL4-associated factor 10 (559 aa).

Positions 1-119 (MFPFGPHSPG…HGLGAGLGGP (119 aa)) are disordered. Phosphoserine is present on residues S53, S63, S89, and S92. Over residues 56–86 (RPGAPSLSPAPRSGELGLPGAPESSTASAPG) the composition is skewed to low complexity. Positions 87-97 (EPSPPSPPCRR) are enriched in pro residues. R134 carries the omega-N-methylarginine modification. WD repeat units lie at residues 166 to 205 (RTHG…HIKT), 209 to 247 (AHED…TKVC), 251 to 290 (GHTS…EDGC), and 296 to 335 (FHTR…KSLE). A Phosphoserine modification is found at S349. The segment covering 350-367 (SSDLTTSSSSSGPRVSGS) has biased composition (low complexity). The disordered stretch occupies residues 350-396 (SSDLTTSSSSSGPRVSGSPCHHSDSNSSEKHMSRASQREGVSPRNSL). Over residues 370–381 (HHSDSNSSEKHM) the composition is skewed to basic and acidic residues. WD repeat units lie at residues 408–448 (DHGN…QEGA), 470–508 (VGRG…SELV), and 526–559 (SHND…QPKF).

This sequence belongs to the WD repeat DCAF10 family. As to quaternary structure, interacts with DDB1.

It participates in protein modification; protein ubiquitination. Functionally, may function as a substrate receptor for CUL4-DDB1 E3 ubiquitin-protein ligase complex. This Homo sapiens (Human) protein is DDB1- and CUL4-associated factor 10 (DCAF10).